The sequence spans 1677 residues: Zinc finger protein 831 (1677 aa).

A compositionally biased stretch (pro residues) spans 1–26 (MEVPEPTCPAPPARDQPAPTPGPPGA). Residues 1–43 (MEVPEPTCPAPPARDQPAPTPGPPGAPGGQASPHLTLGPVLLP) are disordered. 2 C2H2-type zinc fingers span residues 144–166 (YLCP…IRSH) and 172–196 (FPCA…TQTH). Disordered stretches follow at residues 193–250 (TQTH…SPGA), 270–398 (GSAF…AGLE), 516–557 (WLEP…PSGH), 663–931 (EAAG…VLSA), 950–1062 (TPLP…TCEA), 1100–1119 (NWEL…SGPL), 1137–1176 (LTRP…PFPS), 1216–1243 (LRDE…GPAQ), 1510–1597 (SAES…GQYG), and 1620–1677 (LITR…VIEI). Composition is skewed to basic and acidic residues over residues 216–232 (EGDK…RGES) and 325–341 (KPWD…KCES). The segment covering 376–385 (EGGPGPGPGV) has biased composition (gly residues). Positions 391–423 (GAREAGLELEKKRLEERIAQLISHNQAVVDDAQ) form a coiled coil. Basic and acidic residues-rich tracts occupy residues 517–526 (LEPREPRDPW), 674–684 (QDRRTPVHEDI), 707–727 (PTKH…RVEE), and 813–834 (SGED…HSWK). Low complexity-rich tracts occupy residues 880-894 (LESS…SVAL) and 905-919 (PLHP…HPSL). Residues 1153–1170 (SSHSGTSRSHSTRSPHST) are compositionally biased toward low complexity. Positions 1518–1531 (QTAGRTLTSSSPDS) are enriched in polar residues. A compositionally biased stretch (basic and acidic residues) spans 1649–1662 (RSLEGMRKQTRVEF).

This is Zinc finger protein 831 (ZNF831) from Homo sapiens (Human).